We begin with the raw amino-acid sequence, 385 residues long: Guanine nucleotide-binding protein alpha-5 subunit (385 aa).

The N-myristoyl glycine moiety is linked to residue glycine 2. Residue cysteine 6 is the site of S-palmitoyl cysteine attachment. In terms of domain architecture, G-alpha spans 32-385; it reads RKIKMLLLGI…NKNIETLSLE (354 aa). The interval 35–48 is G1 motif; sequence KMLLLGISDSGKST. Residues 40–47, 174–180, 199–203, 298–301, and alanine 357 contribute to the GTP site; these read GISDSGKS, IHMRQTT, DVGGQ, and NKID. Mg(2+) is bound by residues serine 47 and threonine 180. Positions 172 to 180 are G2 motif; sequence DLIHMRQTT. Residues 195–204 are G3 motif; it reads IRLIDVGGQK. The segment at 294-301 is G4 motif; the sequence is MLFLNKID. The segment at 355–360 is G5 motif; that stretch reads TQATIT.

The protein belongs to the G-alpha family. In terms of assembly, g proteins are composed of 3 units; alpha, beta and gamma. The alpha chain contains the guanine nucleotide binding site.

Its function is as follows. Guanine nucleotide-binding proteins (G proteins) are involved as modulators or transducers in various transmembrane signaling systems. The protein is Guanine nucleotide-binding protein alpha-5 subunit (gpa-5) of Caenorhabditis briggsae.